The following is a 1236-amino-acid chain: ATP-dependent helicase/nuclease subunit A (1236 aa).

Residues 2–457 enclose the UvrD-like helicase ATP-binding domain; it reads AHWTIEQEEA…VDLNKNFRSH (456 aa). 23–30 is an ATP binding site; sequence AAAGSGKT. Residues 515–816 form the UvrD-like helicase C-terminal domain; it reads NTAKRVEICI…RIMSIHKSKG (302 aa).

The protein belongs to the helicase family. AddA subfamily. Heterodimer of AddA and AddB/RexB. Requires Mg(2+) as cofactor.

It catalyses the reaction Couples ATP hydrolysis with the unwinding of duplex DNA by translocating in the 3'-5' direction.. The enzyme catalyses ATP + H2O = ADP + phosphate + H(+). The heterodimer acts as both an ATP-dependent DNA helicase and an ATP-dependent, dual-direction single-stranded exonuclease. Recognizes the chi site generating a DNA molecule suitable for the initiation of homologous recombination. The AddA nuclease domain is required for chi fragment generation; this subunit has the helicase and 3' -&gt; 5' nuclease activities. This chain is ATP-dependent helicase/nuclease subunit A, found in Syntrophomonas wolfei subsp. wolfei (strain DSM 2245B / Goettingen).